Here is a 125-residue protein sequence, read N- to C-terminus: Type-4 ice-structuring protein (125 aa).

The first 20 residues, 1-20 (MKYTLIAAIVVLALAQGTLA), serve as a signal peptide directing secretion.

Belongs to the apolipoprotein A1/A4/E family.

The protein localises to the secreted. Antifreeze proteins lower the blood freezing point. The chain is Type-4 ice-structuring protein from Gadus morhua (Atlantic cod).